The chain runs to 214 residues: Adenylate kinase (214 aa).

15-20 (GAGKGT) contacts ATP. The NMP stretch occupies residues 35–64 (ASGDLFREAIKNQSVIGRKIAAIISQGGYV). AMP contacts are provided by residues Ser36, Arg41, 62–64 (GYV), 90–93 (GYPR), and Gln97. Positions 127 to 164 (NRVICNNCNSVYNLLFQKPLVENSCDQCSAKLVKRSDD) are LID. Residue Arg128 coordinates ATP. Residues Cys131 and Cys134 each contribute to the Zn(2+) site. 137–138 (VY) serves as a coordination point for ATP. Residues Cys151 and Cys154 each contribute to the Zn(2+) site. AMP-binding residues include Arg161 and Arg172. Leu200 provides a ligand contact to ATP.

This sequence belongs to the adenylate kinase family. Monomer.

Its subcellular location is the cytoplasm. It catalyses the reaction AMP + ATP = 2 ADP. Its pathway is purine metabolism; AMP biosynthesis via salvage pathway; AMP from ADP: step 1/1. Catalyzes the reversible transfer of the terminal phosphate group between ATP and AMP. Plays an important role in cellular energy homeostasis and in adenine nucleotide metabolism. The protein is Adenylate kinase of Mycoplasma genitalium (strain ATCC 33530 / DSM 19775 / NCTC 10195 / G37) (Mycoplasmoides genitalium).